The following is a 291-amino-acid chain: uncharacterized protein (291 aa).

The PNPLA domain occupies Gly-5 to Ser-196. Residues Gly-9–Gly-14 carry the GXGXXG motif. Residues Val-34–Gly-50 traverse the membrane as a helical segment. The GXSXG motif lies at Gly-36 to Gly-40. The active-site Nucleophile is the Ser-38. The active-site Proton acceptor is the Asp-183. The DGA/G motif lies at Asp-183 to Gly-185.

The protein localises to the cell membrane. Functionally, probable lipid hydrolase. This is an uncharacterized protein from Bacillus subtilis (strain 168).